Here is a 381-residue protein sequence, read N- to C-terminus: Creatine kinase M-type (381 aa).

The region spanning 11–98 (KLNYKPEEEY…FDPIIQDRHG (88 aa)) is the Phosphagen kinase N-terminal domain. The region spanning 125 to 367 (YVLSSRVRTG…KLMVEMEKKL (243 aa)) is the Phosphagen kinase C-terminal domain. 128 to 132 (SSRVR) lines the ATP pocket. S164 bears the Phosphoserine mark. Residue T166 is modified to Phosphothreonine. Phosphoserine is present on S178. Position 180 is a phosphothreonine (T180). Position 191 (H191) interacts with ATP. Residue S199 is modified to Phosphoserine. ATP is bound by residues R236 and R292. Phosphothreonine is present on residues T313 and T322. ATP contacts are provided by residues 320-325 (RGTGGV) and D335. A Phosphoserine modification is found at S372.

It belongs to the ATP:guanido phosphotransferase family. Dimer of identical or non-identical chains, which can be either B (brain type) or M (muscle type). With MM being the major form in skeletal muscle and myocardium, MB existing in myocardium, and BB existing in many tissues, especially brain.

Its subcellular location is the cytoplasm. It carries out the reaction creatine + ATP = N-phosphocreatine + ADP + H(+). Its function is as follows. Reversibly catalyzes the transfer of phosphate between ATP and various phosphogens (e.g. creatine phosphate). Creatine kinase isoenzymes play a central role in energy transduction in tissues with large, fluctuating energy demands, such as skeletal muscle, heart, brain and spermatozoa. The polypeptide is Creatine kinase M-type (CKM) (Canis lupus familiaris (Dog)).